A 405-amino-acid chain; its full sequence is Elongation factor Tu (405 aa).

Residues 10 to 215 (KPHVNVGTIG…AIDAYIPTPE (206 aa)) form the tr-type G domain. The tract at residues 19-26 (GHVDHGKT) is G1. Residue 19-26 (GHVDHGKT) participates in GTP binding. Threonine 26 contributes to the Mg(2+) binding site. Positions 61 to 65 (GITIN) are G2. Residues 82 to 85 (DCPG) form a G3 region. GTP is bound by residues 82–86 (DCPGH) and 137–140 (NKVD). Positions 137 to 140 (NKVD) are G4. A G5 region spans residues 175–177 (SAL).

Belongs to the TRAFAC class translation factor GTPase superfamily. Classic translation factor GTPase family. EF-Tu/EF-1A subfamily. In terms of assembly, monomer.

Its subcellular location is the cytoplasm. The catalysed reaction is GTP + H2O = GDP + phosphate + H(+). Its function is as follows. GTP hydrolase that promotes the GTP-dependent binding of aminoacyl-tRNA to the A-site of ribosomes during protein biosynthesis. This is Elongation factor Tu from Deinococcus geothermalis (strain DSM 11300 / CIP 105573 / AG-3a).